The chain runs to 348 residues: N-formyl peptide receptor 2 (348 aa).

Asparagine 1 carries N-linked (GlcNAc...) asparagine glycosylation. Residues 1 to 24 (NFSTPLNEHEEVSYESAGYTVLQI) are Extracellular-facing. Residues 25–47 (LPLVVLGVTFVLGVLGNGLVIWV) traverse the membrane as a helical segment. At 48 to 58 (AGFRMTRTVTT) the chain is on the cytoplasmic side. A helical membrane pass occupies residues 59–80 (ICYLNLPLADFSFTATLPFLIV). The Extracellular segment spans residues 81-97 (SMAMGEKWPFGWFLCKL). Cysteines 95 and 173 form a disulfide. The helical transmembrane segment at 98–118 (IHIVVDINLFGSVFLIGFIAL) threads the bilayer. The Cytoplasmic portion of the chain corresponds to 119–137 (DRCICVLHPVWAQNHRTVS). Residues 138 to 159 (LAMKVIIGPWILALVLTLPVFL) form a helical membrane-spanning segment. The Extracellular segment spans residues 160–202 (FLTTVTIPNGDTYCTFNFASWGGTPEERKNVAITMLTARGIIR). Residues 203-223 (FVIGFSMPMSIVAICYGLIAA) form a helical membrane-spanning segment. At 224–239 (KIHKKGMIKSSRPLRV) the chain is on the cytoplasmic side. A helical transmembrane segment spans residues 240 to 263 (LTAVVASFFICWFPFQLVALLSTV). At 264–283 (WLKEMLFYGKYKIINILVNP) the chain is on the extracellular side. A helical transmembrane segment spans residues 284 to 303 (TSSLAFFNSCLNPMLYVFVG). The Cytoplasmic segment spans residues 304–348 (QDFRERLIRSLPTSLERALSEDSAPTNDTAAKCASPPAETELQAM). Residues 323-348 (SEDSAPTNDTAAKCASPPAETELQAM) form a disordered region.

The protein belongs to the G-protein coupled receptor 1 family. Interacts with APP; the interaction takes place at the cell surface and the complex is then rapidly internalized.

It is found in the cell membrane. Its function is as follows. Low affinity receptor for N-formyl-methionyl peptides, which are powerful neutrophil chemotactic factors. Binding of FMLP to the receptor causes activation of neutrophils. This response is mediated via a G-protein that activates a phosphatidylinositol-calcium second messenger system. Receptor for the chemokine-like protein FAM19A5, mediating FAM19A5-stimulated macrophage chemotaxis and the inhibitory effect on TNFSF11/RANKL-induced osteoclast differentiation. This Pongo pygmaeus (Bornean orangutan) protein is N-formyl peptide receptor 2 (FPR2).